We begin with the raw amino-acid sequence, 289 residues long: Mitochondrial fission regulator 1-like (289 aa).

Residue T27 is modified to Phosphothreonine. The residue at position 38 (S38) is a Phosphoserine. At S100 the chain carries Phosphoserine; by AMPK. Phosphoserine occurs at positions 107, 221, and 222. Residue S235 is modified to Phosphoserine; by AMPK. A phosphoserine mark is found at S258 and S270.

It belongs to the MTFR1 family. Phosphorylated by AMPK. Upon stress, phosphorylation at Ser-100 and Ser-235 by AMPK is sufficient to induce mitochondrial fragmentation.

It localises to the mitochondrion outer membrane. Its function is as follows. Mitochondrial protein required for adaptation of miochondrial dynamics to metabolic changes. Regulates mitochondrial morphology at steady state and mediates AMPK-dependent stress-induced mitochondrial fragmentation via the control of OPA1 levels. The chain is Mitochondrial fission regulator 1-like (Mtfr1l) from Mus musculus (Mouse).